A 234-amino-acid chain; its full sequence is KNMITGAAQMDGAILVVSAADGPMPQTREHILLAKRVGVPNIVVFLNKQDMVDDDELLELVELEVRELLTEYGFDGDSIPIVAGSALQAVDAMIAKGTTKQSENEWVDKIHKLMAEVDAFIPTPERIIDKPFLMAIEDVFSITGRGTVATGRIERGKVKVGEIEIVGIRDNRQSIVTGVEMFRKLLDEGMAGDNVGVLLRGIQREDLERGMVLAKSRSITPHTKFESEVYVLKK.

The tr-type G domain maps to 1–125 (KNMITGAAQM…EVDAFIPTPE (125 aa)). A GTP-binding site is contributed by 47-50 (NKQD).

Belongs to the TRAFAC class translation factor GTPase superfamily. Classic translation factor GTPase family. EF-Tu/EF-1A subfamily. As to quaternary structure, monomer.

The protein resides in the cytoplasm. The enzyme catalyses GTP + H2O = GDP + phosphate + H(+). Its function is as follows. GTP hydrolase that promotes the GTP-dependent binding of aminoacyl-tRNA to the A-site of ribosomes during protein biosynthesis. This Prochlorothrix hollandica protein is Elongation factor Tu (tufA).